Here is an 80-residue protein sequence, read N- to C-terminus: Large ribosomal subunit protein uL24 (80 aa).

This sequence belongs to the universal ribosomal protein uL24 family. As to quaternary structure, part of the 50S ribosomal subunit.

One of two assembly initiator proteins, it binds directly to the 5'-end of the 23S rRNA, where it nucleates assembly of the 50S subunit. In terms of biological role, one of the proteins that surrounds the polypeptide exit tunnel on the outside of the subunit. The protein is Large ribosomal subunit protein uL24 of Chlorobaculum tepidum (strain ATCC 49652 / DSM 12025 / NBRC 103806 / TLS) (Chlorobium tepidum).